We begin with the raw amino-acid sequence, 130 residues long: Small ribosomal subunit protein uS9 (130 aa).

This sequence belongs to the universal ribosomal protein uS9 family.

The chain is Small ribosomal subunit protein uS9 from Pseudoalteromonas atlantica (strain T6c / ATCC BAA-1087).